The following is a 98-amino-acid chain: Bombyxin E-1 (98 aa).

An N-terminal signal peptide occupies residues 1–19; it reads MNRPVFLVLLLTGFLCIAA. Q20 is modified (pyrrolidone carboxylic acid). Intrachain disulfides connect C29/C85, C41/C98, and C84/C89. The propeptide at 50–75 is c peptide like; the sequence is SESSLASYSSRGWPWLPTPNFNKRAI.

Belongs to the insulin family. Heterodimer of a B chain and an A chain linked by two disulfide bonds.

It is found in the secreted. Its function is as follows. PTTH is a brain peptide responsible for activation of prothoracic glands to produce ecdysone in insects. The chain is Bombyxin E-1 (BBXE1) from Bombyx mori (Silk moth).